The sequence spans 488 residues: Secreted triacylglycerol lipase LIP1 (488 aa).

Positions 1 to 26 are cleaved as a signal peptide; the sequence is MPSMLSLFYLAQSLFLLLLFPLYGHA. Cysteine 119 and cysteine 288 form a disulfide bridge. Asparagine 183 carries N-linked (GlcNAc...) asparagine glycosylation. Catalysis depends on serine 201, which acts as the Nucleophile. N-linked (GlcNAc...) asparagine glycosylation is present at asparagine 316. Catalysis depends on residues aspartate 348 and histidine 382. The disordered stretch occupies residues 461 to 488; that stretch reads SKSGSSLKSHSHSQTHKHRKDVSTISNA. The span at 469-480 shows a compositional bias: basic residues; the sequence is SHSHSQTHKHRK.

This sequence belongs to the AB hydrolase superfamily. Lipase family. Class Lip subfamily.

The protein resides in the secreted. It carries out the reaction a triacylglycerol + H2O = a diacylglycerol + a fatty acid + H(+). It catalyses the reaction a monoacylglycerol + H2O = glycerol + a fatty acid + H(+). The enzyme catalyses a diacylglycerol + H2O = a monoacylglycerol + a fatty acid + H(+). With respect to regulation, inhibited by different metal ions including Fe(2+), Fe(3+), Cu(2+), and Zn(2+). The monovalent ions Na(+) and K(+) exhibit less dramatic inhibition. In terms of biological role, secreted lipase that releases free fatty acids from monoacylglycerol and triacylglycerol but has no phospholipase or lysophospholipase activities. Has minor esterase activity. Due to an absence of fatty acid synthase genes in Malassezia species, secretory lipases are essential for the yeast to generate free fatty acids from degradation of sebum and assimilate them as lipid sources for growth. Plays important roles not only in lipid metabolism but also in the immune response of host cells and pathogenesis. Hydrolyzes lipids, such as Tween 20, 40 and 80, with Tween 80 being the best substrate. This chain is Secreted triacylglycerol lipase LIP1, found in Malassezia furfur (Pityriasis versicolor infection agent).